The following is a 250-amino-acid chain: 5-oxoprolinase subunit A (250 aa).

Belongs to the LamB/PxpA family. In terms of assembly, forms a complex composed of PxpA, PxpB and PxpC.

It catalyses the reaction 5-oxo-L-proline + ATP + 2 H2O = L-glutamate + ADP + phosphate + H(+). Its function is as follows. Catalyzes the cleavage of 5-oxoproline to form L-glutamate coupled to the hydrolysis of ATP to ADP and inorganic phosphate. This chain is 5-oxoprolinase subunit A, found in Thermus thermophilus (strain ATCC 27634 / DSM 579 / HB8).